Reading from the N-terminus, the 108-residue chain is Integration host factor subunit alpha (108 aa).

It belongs to the bacterial histone-like protein family. In terms of assembly, heterodimer of an alpha and a beta chain.

Functionally, this protein is one of the two subunits of integration host factor, a specific DNA-binding protein that functions in genetic recombination as well as in transcriptional and translational control. This chain is Integration host factor subunit alpha, found in Methylorubrum populi (strain ATCC BAA-705 / NCIMB 13946 / BJ001) (Methylobacterium populi).